The sequence spans 201 residues: Small ribosomal subunit protein uS4c (201 aa).

A disordered region spans residues 15 to 44; that stretch reads LGALPGLTNKRPRAGSDLRNQSRSGKKSQY. The S4 RNA-binding domain maps to 89–150; that stretch reads MRLDNILFRL…EQKSKVLIQN (62 aa).

The protein belongs to the universal ribosomal protein uS4 family. Part of the 30S ribosomal subunit. Contacts protein S5. The interaction surface between S4 and S5 is involved in control of translational fidelity.

It localises to the plastid. Its subcellular location is the chloroplast. In terms of biological role, one of the primary rRNA binding proteins, it binds directly to 16S rRNA where it nucleates assembly of the body of the 30S subunit. Its function is as follows. With S5 and S12 plays an important role in translational accuracy. The sequence is that of Small ribosomal subunit protein uS4c (rps4) from Lactuca sativa (Garden lettuce).